Reading from the N-terminus, the 427-residue chain is UPF0761 membrane protein Cphamn1_1013 (427 aa).

The next 6 membrane-spanning stretches (helical) occupy residues 51–71 (LLSLIPLMAVVLSVLSVSPVF), 107–127 (TVPTVGGIFLLIIALFLISTI), 147–167 (FTLYWTVLTLGPIIIGSGLVA), 188–208 (ILSYLPLVNSFLAFFLLYMLV), 218–238 (AVSGAFLATWLFELSKQWFSF), and 251–271 (GALSVIPLLFFWIYLIWVVAL).

It belongs to the UPF0761 family.

The protein resides in the cell inner membrane. In Chlorobium phaeobacteroides (strain BS1), this protein is UPF0761 membrane protein Cphamn1_1013.